A 143-amino-acid chain; its full sequence is Transcriptional regulator MraZ (143 aa).

2 consecutive SpoVT-AbrB domains span residues 5–47 and 76–119; these read EYEH…TLEE and AVEV…DRET.

Belongs to the MraZ family. As to quaternary structure, forms oligomers.

The protein localises to the cytoplasm. Its subcellular location is the nucleoid. The sequence is that of Transcriptional regulator MraZ from Staphylococcus saprophyticus subsp. saprophyticus (strain ATCC 15305 / DSM 20229 / NCIMB 8711 / NCTC 7292 / S-41).